A 76-amino-acid polypeptide reads, in one-letter code: MARQSFKRRKFCRFTAEKIQEVDYKQVDLLKDFISENGKIIPARITGTKAFYQRQLAVAVKRARFLALLPYTDQHK.

The protein belongs to the bacterial ribosomal protein bS18 family. Part of the 30S ribosomal subunit. Forms a tight heterodimer with protein bS6.

Binds as a heterodimer with protein bS6 to the central domain of the 16S rRNA, where it helps stabilize the platform of the 30S subunit. The protein is Small ribosomal subunit protein bS18 of Neisseria gonorrhoeae (strain ATCC 700825 / FA 1090).